The primary structure comprises 79 residues: DNA-directed RNA polymerase subunit omega (79 aa).

It belongs to the RNA polymerase subunit omega family. In terms of assembly, the RNAP catalytic core consists of 2 alpha, 1 beta, 1 beta' and 1 omega subunit. When a sigma factor is associated with the core the holoenzyme is formed, which can initiate transcription.

It carries out the reaction RNA(n) + a ribonucleoside 5'-triphosphate = RNA(n+1) + diphosphate. In terms of biological role, promotes RNA polymerase assembly. Latches the N- and C-terminal regions of the beta' subunit thereby facilitating its interaction with the beta and alpha subunits. This is DNA-directed RNA polymerase subunit omega from Thermotoga neapolitana (strain ATCC 49049 / DSM 4359 / NBRC 107923 / NS-E).